A 143-amino-acid polypeptide reads, in one-letter code: Transmembrane protein 207 (143 aa).

The signal sequence occupies residues 1–29 (MSTSSPFRVASKIVTAGCLCLPLFQRVLS). Residues 52–72 (IWFFLLIFLVVLLCGVVLFCL) traverse the membrane as a helical segment.

Interacts with WWOX.

It is found in the membrane. In Mus musculus (Mouse), this protein is Transmembrane protein 207.